The primary structure comprises 741 residues: Eukaryotic peptide chain release factor GTP-binding subunit (741 aa).

The interval 5-135 (QQQQQQFNAN…SYNNNNNYNN (131 aa)) is several sort of repeats. Positions 59–161 (QQFGQYGQQQ…DQQQETGSGQ (103 aa)) are enriched in low complexity. Disordered regions lie at residues 59 to 186 (QQFG…KKVL) and 199 to 264 (IVTK…KTEA). The charged stretch occupies residues 162–311 (MSLEDYQKQQ…EQIDASIVND (150 aa)). 2 stretches are compositionally biased toward basic and acidic residues: residues 166–175 (DYQKQQKESL) and 202–241 (KKKE…ESKV). One can recognise a tr-type G domain in the interval 316-541 (KDHMSIIFMG…YLDSMPLAVR (226 aa)). Positions 325-332 (GHVDAGKS) are G1. 325–332 (GHVDAGKS) is a binding site for GTP. Residues 381 to 385 (GKTIE) form a G2 region. Position 399 is a phosphothreonine (threonine 399). The tract at residues 402 to 405 (DAPG) is G3. GTP is bound by residues 402 to 406 (DAPGH) and 464 to 467 (NKMD). The tract at residues 464–467 (NKMD) is G4. The segment at 505–507 (SGY) is G5.

This sequence belongs to the TRAFAC class translation factor GTPase superfamily. Classic translation factor GTPase family. ERF3 subfamily.

The protein resides in the cytoplasm. Functionally, involved in translation termination. Stimulates the activity of ERF1. Binds guanine nucleotides. The sequence is that of Eukaryotic peptide chain release factor GTP-binding subunit (SUP2) from Ogataea pini (Yeast).